Here is a 1238-residue protein sequence, read N- to C-terminus: MPAPHRLYPRSLICLAQALLVWALLAWAPAQASQELTLVGKAAVPDVEIALDGDDWRWLARKRVLTLGVYAPDIPPFDVTYDERYEGLTADYMAIIAHNLGVQAKVLRYPTREQAVGALESGQIDLIGTVNGIEGRLQSLRLSVPYAADHPVLVMPIGARRAPPADLAGQRLAVDANYLPRETLQQAYPQATLHYFPSSEQALAAVAYGQADVFIGDALTTSHLVSQSYFNDVRVVAPAQIVTGGESFGVRADNTRLLRVVNAVLEAIPASERRSLIYRWGLGSSISLDFARPAYSAREQQWMANHPVVKVAVLNLFAPFTLFRTDEQFGGISAAVLQLLQLRTGLDFQIIGVDTVEELIAKLRSGEADMAGALFVNAARESVLSFSRPYVRNGMVIVTRQDPAAPADADHLDGRTIAMVRNSAAIPLLQQRYPQAKVVTADNPTEAMLLVADGQADAVVQTQISASYYVNRYFAGKLRIASALDLPPAEIALATARGQTELISILNKALYSISNDELASIVSRWRGSDGDPRTWYAYRNEIYLLIGLGLLSALLFLSWIVYLRRQIRQRKRAERALNDQLEFMRVLIDGTPNPIYVRDKEGRMLLCNDAYLDTFGVTADAVLGKTIPEANVVGDPALAREMHEFLLTRMAAEREPRFEDRDVTLHGRTRHVYQWTVPYGDSLGELKGIIGGWIDITERAELLRELHDAKESADAANRAKTTFLATMSHEIRTPMNAIIGMLELALLRPADQEPDRQSIQVAYDSARSLLELIGDILDIAKIEAGKFDLAPVRTALRALPEGAIRLFDGLARQKGIELVLKTDIVGVDDVLIDPLRMKQVLSNLVGNAIKFTTEGQVVLTVTARPDGEAAHVQFSVSDTGCGISEADQRQLFKPFSQVGGSAEAGPAPGTGLGLSISRRLVELMGGTLVMRSAPGVGTTVSVDLRLTMIEKSAQATPPAAAAQATPSKPQVSLRVLVVDDHKPNLMLLRQQLDYLGQRVVAADSGEAALALWHEHAFDVVITDCNMPGINGYELARRIRAAEAAPGYGRTRCILFGFTASAQMDEAQRCRAAGMDDCLFKPIGVDALRQRLNEAAARAALPTPPSPQAAAPATHDATPAAFSAESILALTQNDEALIRQLLEEVIRTNRADVDQLQKLHQQADWPKVSDMAHRLAGGARVVDAKAMIDTALALEKKAQGQAGPSPEIDGLVRTLAAQSAALETQLRAWLEQRPHQGQP.

Residues 1–32 (MPAPHRLYPRSLICLAQALLVWALLAWAPAQA) form the signal peptide. Residues 33-307 (SQELTLVGKA…REQQWMANHP (275 aa)) are Cytoplasmic-facing. Residues 308–331 (VVKVAVLNLFAPFTLFRTDEQFGG) form a helical membrane-spanning segment. The Periplasmic segment spans residues 332–541 (ISAAVLQLLQ…PRTWYAYRNE (210 aa)). The chain crosses the membrane as a helical span at residues 542-563 (IYLLIGLGLLSALLFLSWIVYL). Over 564–1238 (RRQIRQRKRA…LEQRPHQGQP (675 aa)) the chain is Cytoplasmic. The PAS domain maps to 580–651 (QLEFMRVLID…MHEFLLTRMA (72 aa)). The 57-residue stretch at 652 to 708 (AEREPRFEDRDVTLHGRTRHVYQWTVPYGDSLGELKGIIGGWIDITERAELLRELHD) folds into the PAC domain. Residues 726–948 (TMSHEIRTPM…TVSVDLRLTM (223 aa)) enclose the Histidine kinase domain. His729 carries the phosphohistidine; by autocatalysis modification. Residues 974–1095 (RVLVVDDHKP…ALRQRLNEAA (122 aa)) enclose the Response regulatory domain. 4-aspartylphosphate is present on Asp1023. Positions 1133 to 1228 (DEALIRQLLE…AALETQLRAW (96 aa)) constitute an HPt domain. The residue at position 1172 (His1172) is a Phosphohistidine.

Activation requires a sequential transfer of a phosphate group from a His in the primary transmitter domain, to an Asp in the receiver domain and to a His in the secondary transmitter domain.

Its subcellular location is the cell inner membrane. The catalysed reaction is ATP + protein L-histidine = ADP + protein N-phospho-L-histidine.. Its function is as follows. Member of the two-component regulatory system BvgS/BvgA. Phosphorylates BvgA via a four-step phosphorelay in response to environmental signals. In Bordetella parapertussis (strain 12822 / ATCC BAA-587 / NCTC 13253), this protein is Virulence sensor protein BvgS (bvgS).